The following is a 449-amino-acid chain: NADP-specific glutamate dehydrogenase (449 aa).

3 residues coordinate substrate: Lys92, Gln113, and Lys116. The active-site Proton donor is Lys128. Gly167 is a binding site for substrate. 2 residues coordinate NADP(+): Thr211 and Asn242. Ser380 contributes to the substrate binding site.

It belongs to the Glu/Leu/Phe/Val dehydrogenases family. As to quaternary structure, homohexamer.

It carries out the reaction L-glutamate + NADP(+) + H2O = 2-oxoglutarate + NH4(+) + NADPH + H(+). Functionally, catalyzes the reversible oxidative deamination of glutamate to alpha-ketoglutarate and ammonia. In Haemophilus influenzae (strain ATCC 51907 / DSM 11121 / KW20 / Rd), this protein is NADP-specific glutamate dehydrogenase (gdhA).